Here is a 252-residue protein sequence, read N- to C-terminus: Ribosomal RNA small subunit methyltransferase J (252 aa).

S-adenosyl-L-methionine contacts are provided by residues 101–102 (RD), 117–118 (ER), 153–154 (SS), and aspartate 171.

It belongs to the methyltransferase superfamily. RsmJ family.

Its subcellular location is the cytoplasm. It carries out the reaction guanosine(1516) in 16S rRNA + S-adenosyl-L-methionine = N(2)-methylguanosine(1516) in 16S rRNA + S-adenosyl-L-homocysteine + H(+). Its function is as follows. Specifically methylates the guanosine in position 1516 of 16S rRNA. The protein is Ribosomal RNA small subunit methyltransferase J of Salmonella dublin (strain CT_02021853).